Reading from the N-terminus, the 155-residue chain is Small ribosomal subunit protein uS7cz/uS7cy (155 aa).

It belongs to the universal ribosomal protein uS7 family. Part of the 30S ribosomal subunit.

It localises to the plastid. The protein localises to the chloroplast. One of the primary rRNA binding proteins, it binds directly to 16S rRNA where it nucleates assembly of the head domain of the 30S subunit. The chain is Small ribosomal subunit protein uS7cz/uS7cy (rps7-A) from Coffea arabica (Arabian coffee).